The following is a 273-amino-acid chain: Putative deoxyribonuclease TATDN1 homolog (273 aa).

Glu91, His125, His147, and Asp195 together coordinate a divalent metal cation.

This sequence belongs to the metallo-dependent hydrolases superfamily. TatD-type hydrolase family. The cofactor is a divalent metal cation.

The protein resides in the nucleus. Putative deoxyribonuclease. The chain is Putative deoxyribonuclease TATDN1 homolog from Encephalitozoon cuniculi (strain GB-M1) (Microsporidian parasite).